The sequence spans 253 residues: Chloride intracellular channel protein 4 (253 aa).

Alanine 2 carries the post-translational modification N-acetylalanine. A required for insertion into the membrane region spans residues 2–101 (ALSMPLNGLK…EEFLEEVLCP (100 aa)). Serine 4 is modified (phosphoserine). At lysine 24 the chain carries N6-acetyllysine. A G-site motif is present at residues 35-38 (CPFS). Residues 37–57 (FSQRLFMILWLKGVVFSVTTV) form a helical membrane-spanning segment. The GST C-terminal domain maps to 81-244 (NSEVKTDVNK…PSDKEVEIAY (164 aa)). Position 130 is an N6-acetyllysine (lysine 130). Serine 132, serine 167, and serine 236 each carry phosphoserine. Phosphotyrosine is present on tyrosine 244.

Belongs to the chloride channel CLIC family. Monomer. Interacts with HRH30. Interacts with AKAP9. As to expression, detected in blood vessels in the retina (at protein level). Expressed to the greatest extent in vivo in heart, lung, liver, kidney, and skin.

It localises to the cytoplasm. Its subcellular location is the cytoskeleton. The protein resides in the microtubule organizing center. The protein localises to the centrosome. It is found in the cytoplasmic vesicle membrane. It localises to the nucleus. Its subcellular location is the cell membrane. The protein resides in the mitochondrion. The protein localises to the cell junction. The enzyme catalyses chloride(in) = chloride(out). The catalysed reaction is thiocyanate(in) = thiocyanate(out). It carries out the reaction nitrate(in) = nitrate(out). It catalyses the reaction iodide(out) = iodide(in). The enzyme catalyses bromide(in) = bromide(out). The catalysed reaction is fluoride(in) = fluoride(out). It carries out the reaction choline(out) = choline(in). Its function is as follows. In the soluble state, catalyzes glutaredoxin-like thiol disulfide exchange reactions with reduced glutathione as electron donor. Can insert into membranes and form voltage-dependent multi-ion conductive channels. Membrane insertion seems to be redox-regulated and may occur only under oxidizing conditions. Has alternate cellular functions like a potential role in angiogenesis or in maintaining apical-basolateral membrane polarity during mitosis and cytokinesis. Could also promote endothelial cell proliferation and regulate endothelial morphogenesis (tubulogenesis). Promotes cell-surface expression of HRH3. This Mus musculus (Mouse) protein is Chloride intracellular channel protein 4 (Clic4).